Reading from the N-terminus, the 72-residue chain is Thiostrepton (72 aa).

Positions 1-55 are excised as a propeptide; the sequence is MDATAIHERWSVMSNASIGQEIGVEGLTGLDVDALEISDYVDETLLDGEDLTVTM. The segment at residues 56 to 67 is a cross-link (4-(1-hydroxyethyl)-7-isoleucino-2-(threonin-O3-ylcarbonyl)-7,8-dihydroquinolin-8-ol (Ile-Thr)); sequence IASASCTTCICT. S58 is modified (2,3-didehydroalanine (Ser)). The thiazole-4-carboxylic acid (Ser-Cys) cross-link spans 60–61; the sequence is SC. Positions 60–68 form a cross-link, 5-amino-piperideine-2,5-dicarboxylic acid (Ser-Cys) (with S-69); that stretch reads SCTTCICTC. A cross-link (5-amino-piperideine-2,5-dicarboxylic acid (Ser-Ser) (with C-68)) is located at residues 60 to 69; that stretch reads SCTTCICTCS. A (Z)-2,3-didehydrobutyrine modification is found at T63. A cross-link ((4S)-thiazoline-4-carboxylic acid (Thr-Cys)) is located at residues 63–64; the sequence is TC. I65 carries the post-translational modification (3S,4R)-3,4-dihydroxyisoleucine. The thiazole-4-carboxylic acid (Ile-Cys) cross-link spans 65-66; the sequence is IC. Positions 67-68 form a cross-link, thiazole-4-carboxylic acid (Thr-Cys); sequence TC. Residues 69–70 constitute a cross-link (thiazole-4-carboxylic acid (Ser-Cys)); that stretch reads SC. Residues S71 and S72 each carry the 2,3-didehydroalanine (Ser) modification. At S72 the chain carries Serine amide.

This sequence belongs to the thiocillin family. Maturation of thiazole and oxazole containing antibiotics involves the enzymatic condensation of a Cys, Ser or Thr with the alpha-carbonyl of the preceding amino acid to form a thioether or ether bond, then dehydration to form a double bond with the alpha-amino nitrogen. Thiazoline or oxazoline ring are dehydrogenated to form thiazole or oxazole rings. Post-translationally, maturation of pyridinyl containing antibiotics involves the cross-linking of a Ser and a Cys-Ser pair usually separated by 7 or 8 residues along the peptide chain. The Ser residues are dehydrated to didehydroalanines, then bonded between their beta carbons. The alpha carbonyl of the Cys condenses with alpha carbon of the first Ser to form a pyridinyl ring. The ring may be multiply dehydrogenated to form a pyridine ring with loss of the amino nitrogen of the first Ser. In terms of processing, the amidation of Ser-72 probably does not occur by the same mechanism, oxidative cleavage of glycine, as in eukaryotes. The structure of the 2,3-didehydrobutyrin is shown to be Z-isomer.

It localises to the secreted. Functionally, has bacteriocidal activity. Inhibits bacterial protein biosynthesis by acting on the elongation factor Tu (EF-Tu). This chain is Thiostrepton (tpdA), found in Streptomyces azureus.